A 1298-amino-acid polypeptide reads, in one-letter code: MAAVYGIQLVNKLNTATVRRTYLPNRYDILIDRLTNHTQHNVLHRALDFNATTREATVVQLYPPLNAWTPSSATNVTDYTYLEWVDFIQERSTTFSEVLRQRYPITTYANRFVNPLVVGAAFSDFLNADDISVYLEHLFYDPRVESPVQAILSFPYQWTPRFHVFQEFIRTGAGCKYARSSRDMTPPTPARLPRYGKHRPAYATVFYYNTLAARSTILAGISAGPTALEHFDSPTYGPHIILPQAGDVLGYHSRPVSQADLLMTESVMDCLRENSQASASTAVARLDQTYHPVANFDPTNEDSMMSRLTNLALLVVQGAQAELAIPTVPTNDDVRGFVARLMSEGQRQRWFPYRTDRVLIHPDSPFVLPPGDFYAAYRVANFPFTSGTYTSVPNATKPLRVLPQYRAATILPAQATQAYEDHVIAPININHGYCISGGVYFTADDISIDPTPFPARDLAQLPQNYFDPNRMARRELLRRLRVPSDRSYLKDNAVFTFLASLVNPATALPALQPGFSLAYLGASAAHAKSDEPTILADLRNGSIPGLPIPSRIAQFGYDVVHGSLLDLTRAVPTGTFGLVYADLDQVEDAGTDLPAANRAALAMLGTTLQMCTAGGVAVLKVNFPTVEFWTQLFNQYATFATTLHVVKPIVVNSSEVFVVMSGRQSAGNLTCTTSLQRALLAMYARNAAIDQTMTHVPMLGQADDGTSALGMEAIRLFDPLFVEGNPNAATSALATLMANVVPSSIHMSRLPVNGPVSTTIFGKRTFLSTRRRDRLLEYPLPMVTAINHQRRFTAPPSFSIYPTEPVNVTTLVAAGYNAYVHTVITSAQPAHLFDLGTGPECRILSLVPQNTRVTMVDSRPCAELMQAYDPNTTAYEQADYTLAAFWNGRQCDAVSAIFTLGAAAASNAVTIDALLANLLPSIANAGTTRLWLQVNAPLAGPTPIPGLIDIDTRAGTYTFNNGERTEPYIDPQVMQATVLAHFPNATLSWYTLPPTCEWLDYIIGAGSSLDLSTIPTALQYSQLTPILSIDTNVAPLRVNPIPTPLGQQCAIRIPTNDPAAVLDAKHRGVPVITGTPAALTSLMGNAALQYIQANNEFLLQLTPTLAGIFDVTLTSAGQPPIPRGSFTITAPPPTAAVTMPANIDYTDAGNDGPIACDPYYNLAVCIMRNGQYVRVNPEKARVETVAAGRALHFVLDLADNHVLMYLCDVTPAAIGAIIAHPLADIYQLVFPNNTPLRASLPYIGGGARVELNNQPYLSLTNPPPVLPAGTALAALATAASVGQPTYTLPAGAYRYVLE.

This sequence belongs to the aquareoviridae outer capsid VP1 protein family.

The protein resides in the virion. The catalysed reaction is a 5'-end diphospho-ribonucleoside in mRNA + GTP + H(+) = a 5'-end (5'-triphosphoguanosine)-ribonucleoside in mRNA + diphosphate. It catalyses the reaction a 5'-end (5'-triphosphoguanosine)-ribonucleoside in mRNA + S-adenosyl-L-methionine = a 5'-end (N(7)-methyl 5'-triphosphoguanosine)-ribonucleoside in mRNA + S-adenosyl-L-homocysteine. Its function is as follows. Outer capsid protein involved in mRNA capping. Catalyzes the last 3 enzymatic activities for formation of the 5' cap structure on the viral plus-strand transcripts, namely the RNA guanylyltransferase, RNA-7N- and RNA-2'O-methyltransferase activities. The polypeptide is Outer capsid protein VP1 (S1) (Ctenopharyngodon idella (Grass carp)).